Consider the following 1044-residue polypeptide: Elongation factor 3 (1044 aa).

The HEAT 1 repeat unit spans residues 5–42 (AQSIKVLGELFEKLSVATAENREATATEIASFLNGNII). ADP contacts are provided by isoleucine 42 and histidine 44. The stretch at 45-80 (DVPEEFFKNLTKAVKDKKTAAAALETIAHIANENNL) is one HEAT 2 repeat. Serine 83 contacts ADP. HEAT repeat units follow at residues 86-123 (PYIVDLVPEVCVKTGDKDKDVQSIASETLLAIVKAIDP), 124-162 (VAIKVILPHLTKSLVTTNKWQEKVSVLAAISALVDAAKT), 166-203 (LRMPELIPVLSEAMWDTKKEVKHAATATMTKATETVDN), 205-241 (DIERFIPELIQCIADPSQVSETVHLLGATTFVAEVTP), 242-279 (ATLSIMVPLLNRGLAERETSIKRKAAVIIDNMCKLVED), and 285-323 (PFLEKLLPGLKNNFATIADPEAREVTLRGLKTLRRVGNV). Residues threonine 392, histidine 396, and glutamate 397 each contribute to the ADP site. 2 ABC transporter domains span residues 426-641 (DEGE…YYEL) and 667-993 (VKVS…KKED). Residues asparagine 703, glutamate 922, asparagine 925, and histidine 951 each contribute to the ADP site. The disordered stretch occupies residues 975 to 1044 (GHNWVSGQGS…DAYVSSDDEF (70 aa)). Basic and acidic residues predominate over residues 987–999 (RLEKKEDEGDKFD). Basic residues predominate over residues 1009-1031 (NKKKKLSSAELRKKKKERMKKKK).

It belongs to the ABC transporter superfamily. ABCF family. EF3 subfamily. In terms of assembly, monomer.

Its subcellular location is the cytoplasm. The enzyme catalyses ATP + H2O = ADP + phosphate + H(+). It functions in the pathway protein biosynthesis; polypeptide chain elongation. Its function is as follows. Ribosome-dependent ATPase that functions in cytoplasmic translation elongation. Required for the ATP-dependent release of deacylated tRNA from the ribosomal E-site during protein biosynthesis. Stimulates the eEF1A-dependent binding of aminoacyl-tRNA to the ribosomal A-site, which has reduced affinity for tRNA as long as the E-site is occupied. Assists translation termination by stimulating the release of nascent protein from the ribosome by release factors. In Eremothecium gossypii (strain ATCC 10895 / CBS 109.51 / FGSC 9923 / NRRL Y-1056) (Yeast), this protein is Elongation factor 3 (TEF3).